The sequence spans 359 residues: Heat-inducible transcription repressor HrcA (359 aa).

It belongs to the HrcA family.

Functionally, negative regulator of class I heat shock genes (grpE-dnaK-dnaJ and groELS operons). Prevents heat-shock induction of these operons. The polypeptide is Heat-inducible transcription repressor HrcA (Roseiflexus sp. (strain RS-1)).